The sequence spans 892 residues: Dystroglycan 1 (892 aa).

The N-terminal stretch at 1–27 (MRMSAGLSLLLPLWGRTFLLLLSVAMA) is a signal peptide. The Extracellular segment spans residues 28 to 750 (QSHWPSEAGR…SSEDDVYLHT (723 aa)). The tract at residues 30–405 (HWPSEAGRDW…GQIRPTMTIP (376 aa)) is required for laminin recognition. The segment at 46–68 (SMHSVLSDLHEAVPTVVGIPDGI) is O-glycosylated at one site. Asn138 carries an N-linked (GlcNAc...) asparagine glycan. Cys179 and Cys261 are joined by a disulfide. The interval 313–482 (ATPTPVTAIG…PPTRIRTTTS (170 aa)) is mucin-like domain. O-linked (Man6P...) threonine glycans are attached at residues Thr314, Thr316, and Thr376. Residues 378–497 (TLGPIQPTRV…GEPNQRPELK (120 aa)) form a disordered region. Residues 410–444 (PTAVATPPTTTTKKPRVSTPKPATPSTDSSTTTTR) show a composition bias toward low complexity. Positions 460–482 (TTKAPITRLETASPPTRIRTTTS) are O-glycosylated at seven sites with GalNAc. The Peptidase S72 domain occupies 600-709 (RAPARFKAKF…SSIAVTGSGS (110 aa)). N-linked (GlcNAc...) asparagine glycosylation is found at Asn638, Asn646, and Asn658. A disulfide bond links Cys666 and Cys710. Positions 721-742 (PRRVPSEVPSTDVPDRDPEKSS) are disordered. A compositionally biased stretch (basic and acidic residues) spans 733–742 (VPDRDPEKSS). The chain crosses the membrane as a helical span at residues 751-771 (VIPAVVVAAILLIAGIIAMIC). At 772–892 (YRKKRKGKLT…YRSPPPYVPP (121 aa)) the chain is on the cytoplasmic side. A Nuclear localization signal motif is present at residues 773–779 (RKKRKGK). Position 787 is a phosphothreonine (Thr787). The required for interaction with CAV3 stretch occupies residues 816–892 (LQEEKAPLPP…YRSPPPYVPP (77 aa)). A disordered region spans residues 820–892 (KAPLPPPEYP…YRSPPPYVPP (73 aa)). Polar residues predominate over residues 829-843 (PNQSVPETTPLNQDT). Residues 856–867 (NAPPYQPPPPFT) are compositionally biased toward pro residues. The required for binding DMD and UTRN stretch occupies residues 877-892 (PKNMTPYRSPPPYVPP). Positions 886 to 889 (PPPY) match the PPXY motif motif. Tyr889 carries the phosphotyrosine; by SRC modification.

Monomer. Heterodimer of alpha- and beta-dystroglycan subunits which are the central components of the dystrophin-glycoprotein complex. This complex then can form a dystrophin-associated glycoprotein complex (DGC) which is composed of three subcomplexes: a cytoplasmic complex comprised of DMD (or UTRN), DTNA and a number of syntrophins, such as SNTB1, SNTB2, SNTG1 and SNTG2, the transmembrane dystroglycan complex, and the sarcoglycan-sarcospan complex. Interacts (via the N-terminal of alphaDAG1) with LARGE1; the interaction enhances laminin binding. Interacts with SGCD. Interacts with AGR2 and AGR3. Interacts (betaDAG1) with DMD; the interaction is inhibited by phosphorylation on the PPXY motif. Interacts (betaDAG1, via its PPXY motif) with UTRN (via its WWW and ZZ domains); the interaction is inhibited by phosphorylation on the PPXY motif. Interacts (betaDAG1, via its phosphorylated PPXY motif) with the SH2 domain-containing proteins, FYN, CSK, NCK and SHC. Interacts (betaDAG1) with CAV3 (via a central WW-like domain); the interaction disrupts the binding of DMD. BetaDAG1 directly interacts with ANK3, but not with ANK2; this interaction does not interfere with DMD-binding and is required for retention at costameres. Identified in a dystroglycan complex that contains at least PRX, DRP2, UTRN, DMD and DAG1. Interacts with POMGNT1. BetaDAG1 interacts with CD93. In terms of processing, O-glycosylated. POMGNT1 catalyzes the initial addition of N-acetylglucosamine, giving rise to the GlcNAc(beta1-2)Man(alpha1-)O-Ser/Thr moiety and thus providing the necessary basis for the addition of further carbohydrate moieties. Heavily O-glycosylated comprising of up to two thirds of its mass and the carbohydrate composition differs depending on tissue type. Mucin-type O-glycosylation is important for ligand binding activity. O-mannosylation is found in high abundance in both brain and muscle where the most abundant glycan is Sia-alpha-2-3-Gal-beta-1-4-Glc-NAc-beta-1-2-Man. In muscle, glycosylation on Thr-314, Thr-316 and Thr-376 by a phosphorylated O-mannosyl glycan with the structure 2-(N-acetylamido)-2-deoxygalactosyl-beta-1,3-2-(N-acetylamido)-2-deoxyglucosyl-beta-1,4-6-phosphomannose is mediated by like-acetylglucosaminyltransferase (LARGE1) protein amd is required for laminin binding. O-glycosylated in the N-terminal region with a core 1 or possibly core 8 glycan. The brain form displays a unique glycosylation pattern which is absent in other tissues; this form shows enhanced binding to laminin LAMA5 compared to the skeletal muscle form. Post-translationally, N-glycosylated. Autolytic cleavage produces the alpha and beta subunits. In cutaneous cells, as well as in certain pathological conditions, shedding of beta-dystroglycan can occur releasing a peptide of about 30 kDa. In terms of processing, SRC-mediated phosphorylation of the PPXY motif of the beta subunit recruits SH2 domain-containing proteins, but inhibits binding to WWW domain-containing proteins, DMD and UTRN. This phosphorylation also inhibits nuclear entry.

It localises to the secreted. It is found in the extracellular space. The protein resides in the cell membrane. Its subcellular location is the cytoplasm. The protein localises to the cytoskeleton. It localises to the nucleus. It is found in the nucleoplasm. The protein resides in the sarcolemma. Its subcellular location is the postsynaptic cell membrane. In terms of biological role, the dystroglycan complex is involved in a number of processes including laminin and basement membrane assembly, sarcolemmal stability, cell survival, peripheral nerve myelination, nodal structure, cell migration, and epithelial polarization. Its function is as follows. Extracellular peripheral glycoprotein that acts as a receptor for extracellular matrix proteins containing laminin-G domains. Receptor for laminin-2 (LAMA2) and agrin in peripheral nerve Schwann cells. Also acts as a receptor for laminin LAMA5. Functionally, transmembrane protein that plays important roles in connecting the extracellular matrix to the cytoskeleton. Acts as a cell adhesion receptor in both muscle and non-muscle tissues. Receptor for both DMD and UTRN and, through these interactions, scaffolds axin to the cytoskeleton. Also functions in cell adhesion-mediated signaling and implicated in cell polarity. The polypeptide is Dystroglycan 1 (Canis lupus familiaris (Dog)).